The primary structure comprises 247 residues: MWILKSGFNRCRNFSFMNRGLLGLRNLSVTHNNLVSYLEHLSVQKPSTSNTVAQGTLFEYLVQYVLKQHSFQLERCGGKGDGGVDLVGQFSIKNVLFEPTKVVVSCKSNKGSIGPRFVRELEGSLSSYPTDTLGILACLGSFTSSSLKTLSISNRPLALCRIYVDGFHSYMFQFVWNHQALAIFPDLSVRQIYKLPSPTANIVPLSQEFSQVNYVSLFELLQPLSRTEERPVPLVLVYKNQKISLNC.

Its subcellular location is the mitochondrion. This is an uncharacterized protein from Schizosaccharomyces pombe (strain 972 / ATCC 24843) (Fission yeast).